A 515-amino-acid polypeptide reads, in one-letter code: E3 ubiquitin-protein ligase RNF217 (515 aa).

Disordered stretches follow at residues 1–125 and 147–189; these read MGEE…VLAQ and PEAP…ADPL. The span at 10-22 shows a compositional bias: gly residues; sequence GSGGARASGGGSA. Low complexity-rich tracts occupy residues 39 to 49 and 147 to 157; these read GPRAAASSSRP and PEAPSAESPSP. Residues 158–178 show a composition bias toward pro residues; the sequence is SESPPQAPLGPIPASPPPSFP. Residues 179–189 show a composition bias toward low complexity; that stretch reads SSPLSLPADPL. Residues 232–451 are TRIAD supradomain; the sequence is MVLMCRVCLE…LSIFGCKYRY (220 aa). Zn(2+) is bound by residues cysteine 236, cysteine 239, cysteine 256, cysteine 259, cysteine 356, cysteine 359, histidine 364, cysteine 369, cysteine 396, and cysteine 399. An RING-type 1 zinc finger spans residues 236–282; sequence CRVCLEDKPIKPLPCCKKAVCEECLKIYLSSQVQLGQVEIKCPVTEC. An IBR-type zinc finger spans residues 301–369; the sequence is IKYKYFLELG…HSPWHEGVNC (69 aa). The RING-type 2; atypical zinc finger occupies 396–425; the sequence is CPKCKIHIQRTEGCDHMTCSQCNTNFCYRC. Residue cysteine 409 is part of the active site. Zn(2+)-binding residues include cysteine 414, cysteine 417, cysteine 422, cysteine 425, histidine 438, and cysteine 447. Residues 476–496 form a helical membrane-spanning segment; that stretch reads LILVLGLALGAIAVVIGLFVF.

This sequence belongs to the RBR family. RNF217 subfamily. As to quaternary structure, interacts with HAX1.

The protein localises to the membrane. It localises to the cytoplasm. The catalysed reaction is [E2 ubiquitin-conjugating enzyme]-S-ubiquitinyl-L-cysteine + [acceptor protein]-L-lysine = [E2 ubiquitin-conjugating enzyme]-L-cysteine + [acceptor protein]-N(6)-ubiquitinyl-L-lysine.. It participates in protein modification; protein ubiquitination. In terms of biological role, E3 ubiquitin-protein ligase which accepts ubiquitin from E2 ubiquitin-conjugating enzymes in the form of a thioester and then directly transfers the ubiquitin to targeted substrates. Mediates the degradation of the iron exporter ferroportin/SLC40A1 and thus regulates iron homeostasis. The chain is E3 ubiquitin-protein ligase RNF217 (Rnf217) from Mus musculus (Mouse).